A 521-amino-acid polypeptide reads, in one-letter code: Solute carrier family 35 member F4 (521 aa).

Helical transmembrane passes span 160-180 (MVLK…SWVG), 192-212 (FYCP…FFPV), 248-266 (FLKR…NYLY), 277-297 (DVSA…WIVL), 301-321 (FMGV…MMAY), 330-350 (IIGV…KVLF), 365-385 (FVST…VILY), 395-417 (FAAL…NILV), 419-441 (VGVV…PGNA), and 450-470 (VIFN…FLLM). One can recognise an EamA domain in the interval 261-321 (LTNYLYLLAL…AITGIVMMAY (61 aa)).

Belongs to the SLC35F solute transporter family.

It is found in the membrane. Putative solute transporter. In Homo sapiens (Human), this protein is Solute carrier family 35 member F4 (SLC35F4).